We begin with the raw amino-acid sequence, 554 residues long: Phenylalanine--tRNA ligase beta subunit (554 aa).

One can recognise a B5 domain in the interval 276–351 (LTPKSRIISV…INYGYEKFDG (76 aa)). Asp329, Asp335, Glu338, and Glu339 together coordinate Mg(2+).

The protein belongs to the phenylalanyl-tRNA synthetase beta subunit family. Type 2 subfamily. In terms of assembly, tetramer of two alpha and two beta subunits. Requires Mg(2+) as cofactor.

It localises to the cytoplasm. It catalyses the reaction tRNA(Phe) + L-phenylalanine + ATP = L-phenylalanyl-tRNA(Phe) + AMP + diphosphate + H(+). In Methanococcus maripaludis (strain DSM 14266 / JCM 13030 / NBRC 101832 / S2 / LL), this protein is Phenylalanine--tRNA ligase beta subunit.